A 370-amino-acid chain; its full sequence is Histidinol-phosphate aminotransferase (370 aa).

At lysine 230 the chain carries N6-(pyridoxal phosphate)lysine.

Belongs to the class-II pyridoxal-phosphate-dependent aminotransferase family. Histidinol-phosphate aminotransferase subfamily. In terms of assembly, homodimer. The cofactor is pyridoxal 5'-phosphate.

The enzyme catalyses L-histidinol phosphate + 2-oxoglutarate = 3-(imidazol-4-yl)-2-oxopropyl phosphate + L-glutamate. Its pathway is amino-acid biosynthesis; L-histidine biosynthesis; L-histidine from 5-phospho-alpha-D-ribose 1-diphosphate: step 7/9. The protein is Histidinol-phosphate aminotransferase of Leptospira interrogans serogroup Icterohaemorrhagiae serovar Lai (strain 56601).